The sequence spans 185 residues: Threonylcarbamoyl-AMP synthase (185 aa).

Residues 4–185 (SFRAQCAARV…LVTGQVIRPA (182 aa)) enclose the YrdC-like domain.

The protein belongs to the SUA5 family. TsaC subfamily.

The protein resides in the cytoplasm. It carries out the reaction L-threonine + hydrogencarbonate + ATP = L-threonylcarbamoyladenylate + diphosphate + H2O. In terms of biological role, required for the formation of a threonylcarbamoyl group on adenosine at position 37 (t(6)A37) in tRNAs that read codons beginning with adenine. Catalyzes the conversion of L-threonine, HCO(3)(-)/CO(2) and ATP to give threonylcarbamoyl-AMP (TC-AMP) as the acyladenylate intermediate, with the release of diphosphate. The protein is Threonylcarbamoyl-AMP synthase of Pseudomonas paraeruginosa (strain DSM 24068 / PA7) (Pseudomonas aeruginosa (strain PA7)).